Here is a 252-residue protein sequence, read N- to C-terminus: F-box/SPRY domain-containing protein 1 (252 aa).

In terms of domain architecture, F-box spans 1 to 48; sequence MVDPLCNYNVLESIFSYLELNDLNRCSQVCKSWYHFLNDENSDVWRWH. Residues 58–250 form the B30.2/SPRY domain; the sequence is VKSDLLSSVT…VSMVYLGTPL (193 aa).

The protein belongs to the FBXO45/Fsn family. Component of an E3 ubiquitin ligase complex composed of hiw and Fsn.

It localises to the synapse. It participates in protein modification; protein ubiquitination. In terms of biological role, required in the presynaptic motoneuron to down-regulate the levels of wnd and restrain synaptic terminal growth at the neuromuscular junction (NMJ). This chain is F-box/SPRY domain-containing protein 1, found in Drosophila grimshawi (Hawaiian fruit fly).